Consider the following 240-residue polypeptide: Transcription factor bHLH101 (240 aa).

Positions 65–117 (EKKLNHNASERDRRRKLNALYSSLRALLPLSDQKRKLSIPMTVARVVKYIPEQ) constitute a bHLH domain.

Homodimer. Flowers.

Its subcellular location is the nucleus. This Arabidopsis thaliana (Mouse-ear cress) protein is Transcription factor bHLH101 (BHLH101).